The chain runs to 182 residues: ATP-dependent protease subunit HslV (182 aa).

T7 is an active-site residue. Positions 162, 165, and 168 each coordinate Na(+).

The protein belongs to the peptidase T1B family. HslV subfamily. As to quaternary structure, a double ring-shaped homohexamer of HslV is capped on each side by a ring-shaped HslU homohexamer. The assembly of the HslU/HslV complex is dependent on binding of ATP.

It localises to the cytoplasm. The enzyme catalyses ATP-dependent cleavage of peptide bonds with broad specificity.. Its activity is regulated as follows. Allosterically activated by HslU binding. Protease subunit of a proteasome-like degradation complex believed to be a general protein degrading machinery. The chain is ATP-dependent protease subunit HslV from Legionella pneumophila subsp. pneumophila (strain Philadelphia 1 / ATCC 33152 / DSM 7513).